The following is a 300-amino-acid chain: Acetylglutamate kinase (300 aa).

Residues 72 to 73, Arg-94, and Asn-197 contribute to the substrate site; that span reads GG.

Belongs to the acetylglutamate kinase family. ArgB subfamily.

It is found in the cytoplasm. It carries out the reaction N-acetyl-L-glutamate + ATP = N-acetyl-L-glutamyl 5-phosphate + ADP. Its pathway is amino-acid biosynthesis; L-arginine biosynthesis; N(2)-acetyl-L-ornithine from L-glutamate: step 2/4. Catalyzes the ATP-dependent phosphorylation of N-acetyl-L-glutamate. The sequence is that of Acetylglutamate kinase from Azoarcus sp. (strain BH72).